The sequence spans 320 residues: Malate dehydrogenase (320 aa).

NAD(+) contacts are provided by residues 10–15 and aspartate 34; that span reads GAGMIG. Arginine 83 and arginine 89 together coordinate substrate. NAD(+)-binding positions include asparagine 96 and 119–121; that span reads ITN. Residues asparagine 121 and arginine 152 each coordinate substrate. Residue histidine 176 is the Proton acceptor of the active site.

This sequence belongs to the LDH/MDH superfamily. MDH type 3 family.

It carries out the reaction (S)-malate + NAD(+) = oxaloacetate + NADH + H(+). Its function is as follows. Catalyzes the reversible oxidation of malate to oxaloacetate. The protein is Malate dehydrogenase of Caulobacter vibrioides (strain NA1000 / CB15N) (Caulobacter crescentus).